A 261-amino-acid polypeptide reads, in one-letter code: DNA-directed RNA polymerase subunit Rpo3 (261 aa).

Belongs to the archaeal Rpo3/eukaryotic RPB3 RNA polymerase subunit family. In terms of assembly, part of the RNA polymerase complex.

It localises to the cytoplasm. It carries out the reaction RNA(n) + a ribonucleoside 5'-triphosphate = RNA(n+1) + diphosphate. Functionally, DNA-dependent RNA polymerase (RNAP) catalyzes the transcription of DNA into RNA using the four ribonucleoside triphosphates as substrates. This chain is DNA-directed RNA polymerase subunit Rpo3, found in Pyrococcus furiosus (strain ATCC 43587 / DSM 3638 / JCM 8422 / Vc1).